The primary structure comprises 148 residues: Ubiquitin-conjugating enzyme E2-17 kDa (148 aa).

Residues 1 to 147 (MASKRILKEL…ARSWTQKYAM (147 aa)) enclose the UBC core domain. Residue cysteine 85 is the Glycyl thioester intermediate of the active site.

Belongs to the ubiquitin-conjugating enzyme family.

It carries out the reaction S-ubiquitinyl-[E1 ubiquitin-activating enzyme]-L-cysteine + [E2 ubiquitin-conjugating enzyme]-L-cysteine = [E1 ubiquitin-activating enzyme]-L-cysteine + S-ubiquitinyl-[E2 ubiquitin-conjugating enzyme]-L-cysteine.. The protein operates within protein modification; protein ubiquitination. Functionally, catalyzes the covalent attachment of ubiquitin to other proteins. Mediates the selective degradation of short-lived and abnormal proteins. This is Ubiquitin-conjugating enzyme E2-17 kDa from Solanum lycopersicum (Tomato).